A 41-amino-acid chain; its full sequence is Photosystem II reaction center protein Y (41 aa).

A helical membrane pass occupies residues 4 to 22; it reads LIVVVLPILAAVTWVVFNI.

The protein belongs to the PsbY family. As to quaternary structure, PSII is composed of 1 copy each of membrane proteins PsbA, PsbB, PsbC, PsbD, PsbE, PsbF, PsbH, PsbI, PsbJ, PsbK, PsbL, PsbM, PsbT, PsbX, PsbY, Psb30/Ycf12, peripheral proteins PsbO, CyanoQ (PsbQ), PsbU, PsbV and a large number of cofactors. It forms dimeric complexes.

It localises to the cellular thylakoid membrane. In terms of biological role, loosely associated component of the core of photosystem II (PSII), it is not always seen in crystals. PSII is a light-driven water plastoquinone oxidoreductase, using light energy to abstract electrons from H(2)O, generating a proton gradient subsequently used for ATP formation. In Prochlorococcus marinus (strain MIT 9211), this protein is Photosystem II reaction center protein Y.